We begin with the raw amino-acid sequence, 206 residues long: Protein tyrosine phosphatase receptor type C-associated protein (206 aa).

A helical membrane pass occupies residues valine 34–tryptophan 54. A disordered region spans residues glycine 98–alanine 173. Phosphoserine occurs at positions 99 and 153. Residues leucine 161–alanine 173 show a composition bias toward low complexity.

Interacts with CD45/PTPRC. In terms of processing, phosphorylated on tyrosine residues.

The protein localises to the membrane. The chain is Protein tyrosine phosphatase receptor type C-associated protein (PTPRCAP) from Homo sapiens (Human).